Reading from the N-terminus, the 556-residue chain is Guard cell S-type anion channel SLAC1 (556 aa).

Residues 1–103 (MERKQSNAHS…GIINGGDGRK (103 aa)) form a disordered region. Topologically, residues 1-189 (MERKQSNAHS…EQWPFLLRFP (189 aa)) are cytoplasmic. The stretch at 10-36 (STFADINEVEDEAEQELQQQENNNNKR) forms a coiled coil. Positions 25–34 (ELQQQENNNN) are enriched in low complexity. Ser59 carries the phosphoserine; by SRK2E modification. A compositionally biased stretch (basic and acidic residues) spans 69 to 79 (RESRERDDKKS). 3 positions are modified to phosphoserine; by SRK2E: Ser86, Ser113, and Ser120. Gly residues predominate over residues 86–99 (SFGGFESGGIINGG). Ser146 is modified (phosphoserine). The helical transmembrane segment at 190-210 (IGCFGICLGLSSQAVLWLALA) threads the bilayer. The Extracellular portion of the chain corresponds to 211–216 (KSPATN). The helical transmembrane segment at 217 to 237 (FLHITPLINLVVWLFSLVVLV) threads the bilayer. The Cytoplasmic segment spans residues 238–265 (SVSFTYILKCIFYFEAVKREYFHPVRVN). The helical transmembrane segment at 266 to 286 (FFFAPWVVCMFLAISVPPMFS) threads the bilayer. At 287–295 (PNRKYLHPA) the chain is on the extracellular side. The chain crosses the membrane as a helical span at residues 296-316 (IWCVFMGPYFFLELKIYGQWL). Topologically, residues 317–325 (SGGKRRLCK) are cytoplasmic. A helical transmembrane segment spans residues 326–346 (VANPSSHLSVVGNFVGAILAS). Residues 347–352 (KVGWDE) lie on the Extracellular side of the membrane. A helical membrane pass occupies residues 353–373 (VAKFLWAVGFAHYLVVFVTLY). The Cytoplasmic portion of the chain corresponds to 374 to 388 (QRLPTSEALPKELHP). A helical membrane pass occupies residues 389-409 (VYSMFIAAPSAASIAWNTIYG). Residues 410–418 (QFDGCSRTC) lie on the Extracellular side of the membrane. The helical transmembrane segment at 419 to 439 (FFIALFLYISLVARINFFTGF) threads the bilayer. Residue Lys440 is a topological domain, cytoplasmic. Residues 441–463 (FSVAWWSYTFPMTTASVATIKYA) traverse the membrane as a helical segment. Topologically, residues 464–479 (EAVPGYPSRALALTLS) are extracellular. Residues 480 to 500 (FISTAMVCVLFVSTLLHAFVW) form a helical membrane-spanning segment. At 501–556 (QTLFPNDLAIAITKRKLTREKKPFKRAYDLKRWTKQALAKKISAEKDFEAEEESHH) the chain is on the cytoplasmic side.

This sequence belongs to the SLAC1 S-type anion channel family. As to quaternary structure, homotrimer. Interacts with SRK2E, CPK6, CPK21, CPK23 and PP2CA. The channel is inactivated upon PP2CA and ABI1 binding. Interacts with KAT1, KAT2, KAT3/KC1 and AKT2. Interacts with GHR1. In terms of processing, phosphorylation by SRK2E, especially on Ser-120, activates the channel. Also phosphorylated and activated by CPK21 and CPK23. Abscisic acid (ABA) promotes phosphorylation. This phosphorylation is inhibited by ABI1. Phosphorylated and activated by GHR1; this phosphorylation is repressed by ABI2 but not ABI1. Phosphorylated by HT1 on N-terminus but not C-terminus. In terms of tissue distribution, preferentially expressed in guard cells. Also detected in the vascular strands close to the leaf margins.

It is found in the cell membrane. Activated by GHR1-mediated phosphorylation which is negatively regulated by ABI2 but not ABI1. Activation by SRK2E/OST1 and GHR1 is repressed by HT1. Slow, weak voltage-dependent S-type anion efflux channel involved in maintenance of anion homeostasis. Cl(-) efflux through SLAC1 causes membrane depolarization, which activates outward-rectifying K1 channels, leading to KCl and water efflux to reduce turgor further and cause stomatal closure, that reduces water loss and promotes leaf turgor. Essential for stomatal closure in response to CO(2), abscisic acid (ABA), ozone O(3), light/dark transitions, humidity change, calcium ions, hydrogen peroxide H(2)O(2), reactive oxygen species (ROS), and nitric oxide. Binds to the highly selective inward-rectifying potassium channels KAT1 and AKT2, and inhibits their activities. Functions as an essential negative regulator of inward potassium channels in guard cells. Essential for the efficient stomatal closure and opening in guard cells. Involved in the local and/or systemic stomatal responses (e.g. stomatal closure) to light stress. The sequence is that of Guard cell S-type anion channel SLAC1 from Arabidopsis thaliana (Mouse-ear cress).